Reading from the N-terminus, the 175-residue chain is Adenine phosphoribosyltransferase (175 aa).

Belongs to the purine/pyrimidine phosphoribosyltransferase family. As to quaternary structure, homodimer.

Its subcellular location is the cytoplasm. The catalysed reaction is AMP + diphosphate = 5-phospho-alpha-D-ribose 1-diphosphate + adenine. Its pathway is purine metabolism; AMP biosynthesis via salvage pathway; AMP from adenine: step 1/1. Catalyzes a salvage reaction resulting in the formation of AMP, that is energically less costly than de novo synthesis. The sequence is that of Adenine phosphoribosyltransferase from Pelagibacter ubique (strain HTCC1062).